The sequence spans 295 residues: 4-hydroxy-tetrahydrodipicolinate synthase (295 aa).

Threonine 46 is a pyruvate binding site. Catalysis depends on tyrosine 134, which acts as the Proton donor/acceptor. Residue lysine 162 is the Schiff-base intermediate with substrate of the active site. Isoleucine 205 is a pyruvate binding site.

The protein belongs to the DapA family. Homotetramer; dimer of dimers.

The protein localises to the cytoplasm. It catalyses the reaction L-aspartate 4-semialdehyde + pyruvate = (2S,4S)-4-hydroxy-2,3,4,5-tetrahydrodipicolinate + H2O + H(+). The protein operates within amino-acid biosynthesis; L-lysine biosynthesis via DAP pathway; (S)-tetrahydrodipicolinate from L-aspartate: step 3/4. Its function is as follows. Catalyzes the condensation of (S)-aspartate-beta-semialdehyde [(S)-ASA] and pyruvate to 4-hydroxy-tetrahydrodipicolinate (HTPA). The sequence is that of 4-hydroxy-tetrahydrodipicolinate synthase from Anaeromyxobacter dehalogenans (strain 2CP-C).